We begin with the raw amino-acid sequence, 140 residues long: Nucleoside diphosphate kinase (140 aa).

ATP contacts are provided by Lys11, Phe59, Arg87, Thr93, Arg104, and Asn114. His117 acts as the Pros-phosphohistidine intermediate in catalysis.

This sequence belongs to the NDK family. Homotetramer. Mg(2+) serves as cofactor.

It is found in the cytoplasm. The catalysed reaction is a 2'-deoxyribonucleoside 5'-diphosphate + ATP = a 2'-deoxyribonucleoside 5'-triphosphate + ADP. The enzyme catalyses a ribonucleoside 5'-diphosphate + ATP = a ribonucleoside 5'-triphosphate + ADP. Its function is as follows. Major role in the synthesis of nucleoside triphosphates other than ATP. The ATP gamma phosphate is transferred to the NDP beta phosphate via a ping-pong mechanism, using a phosphorylated active-site intermediate. The sequence is that of Nucleoside diphosphate kinase from Methylorubrum populi (strain ATCC BAA-705 / NCIMB 13946 / BJ001) (Methylobacterium populi).